A 317-amino-acid chain; its full sequence is UDP-3-O-acylglucosamine N-acyltransferase (317 aa).

H229 acts as the Proton acceptor in catalysis.

Belongs to the transferase hexapeptide repeat family. LpxD subfamily. Homotrimer.

It catalyses the reaction a UDP-3-O-[(3R)-3-hydroxyacyl]-alpha-D-glucosamine + a (3R)-hydroxyacyl-[ACP] = a UDP-2-N,3-O-bis[(3R)-3-hydroxyacyl]-alpha-D-glucosamine + holo-[ACP] + H(+). The protein operates within bacterial outer membrane biogenesis; LPS lipid A biosynthesis. In terms of biological role, catalyzes the N-acylation of UDP-3-O-acylglucosamine using 3-hydroxyacyl-ACP as the acyl donor. Is involved in the biosynthesis of lipid A, a phosphorylated glycolipid that anchors the lipopolysaccharide to the outer membrane of the cell. The polypeptide is UDP-3-O-acylglucosamine N-acyltransferase (Campylobacter concisus (strain 13826)).